The sequence spans 388 residues: Beta-hexosaminidase LpqI (388 aa).

The first 19 residues, 1-19 (MAFPRTLAILAAAAALVVA), serve as a signal peptide directing secretion. A lipid anchor (N-palmitoyl cysteine) is attached at cysteine 20. A lipid anchor (S-diacylglycerol cysteine) is attached at cysteine 20. Substrate contacts are provided by residues aspartate 123, arginine 131, arginine 193, and 223-224 (KH). Histidine 236 serves as the catalytic Proton donor/acceptor. Aspartate 311 acts as the Nucleophile in catalysis.

It belongs to the glycosyl hydrolase 3 family.

The protein localises to the cell inner membrane. It carries out the reaction Hydrolysis of terminal non-reducing N-acetyl-D-hexosamine residues in N-acetyl-beta-D-hexosaminides.. It participates in cell wall biogenesis; peptidoglycan recycling. In terms of biological role, plays a role in peptidoglycan recycling by cleaving the terminal beta-1,4-linked N-acetylglucosamine (GlcNAc) from peptidoglycan fragments. Acts as a regulator for GlcNAc-MurNAc levels by cleaving disaccharides and allowing the breakdown of MurNAc. The sequence is that of Beta-hexosaminidase LpqI from Mycobacterium tuberculosis (strain ATCC 25618 / H37Rv).